The primary structure comprises 426 residues: MFEKQVFLFGVNHKTTPVAVREKIAFTDGYETALTRLQEEVGCDESYLLSTCNRVEILVYADSTRDIEAEVSRFLFAGKVPEEDCRDYLYALKGLPAVQHLFTVAASLDSMVVGEAQILGQLKTAYRHASALGCTGPLLNRLLHKSFSVAKRVRTETAIGASAVSISYAAVQLARKIFGNLDTKKVMLVGAGEMAELAAEHLVGQGVSSVVVANRTLTRAVELADKFGGTAICMEELYAQLEDVDIIISSTGAQHIIIESAEVRPIMRVRRNRPLFFIDIAVPRDLDPELNELENVYLYDIDDLSNVVEVNKSGRDHEAIKAGCIVEEETRKFDEWYQGLAVKPTVLALREKMSGIIEQELRKTLPRLHDLGEHDQRSIEKMVASISSKFLHDPLHYLKSDSCHGRDKSQAKVDTLRSVFSLKGDI.

Substrate-binding positions include 51–54 (TCNR), Ser-110, 115–117 (EAQ), and Gln-121. Cys-52 acts as the Nucleophile in catalysis. 190–195 (GAGEMA) serves as a coordination point for NADP(+).

Belongs to the glutamyl-tRNA reductase family. As to quaternary structure, homodimer.

It catalyses the reaction (S)-4-amino-5-oxopentanoate + tRNA(Glu) + NADP(+) = L-glutamyl-tRNA(Glu) + NADPH + H(+). It participates in porphyrin-containing compound metabolism; protoporphyrin-IX biosynthesis; 5-aminolevulinate from L-glutamyl-tRNA(Glu): step 1/2. Catalyzes the NADPH-dependent reduction of glutamyl-tRNA(Glu) to glutamate 1-semialdehyde (GSA). The protein is Glutamyl-tRNA reductase of Desulfotalea psychrophila (strain LSv54 / DSM 12343).